Here is a 271-residue protein sequence, read N- to C-terminus: Putative pyruvate, phosphate dikinase regulatory protein 1 (271 aa).

Residue 156–163 (GVSRTSKT) participates in ADP binding.

Belongs to the pyruvate, phosphate/water dikinase regulatory protein family. PDRP subfamily.

The enzyme catalyses N(tele)-phospho-L-histidyl/L-threonyl-[pyruvate, phosphate dikinase] + ADP = N(tele)-phospho-L-histidyl/O-phospho-L-threonyl-[pyruvate, phosphate dikinase] + AMP + H(+). The catalysed reaction is N(tele)-phospho-L-histidyl/O-phospho-L-threonyl-[pyruvate, phosphate dikinase] + phosphate + H(+) = N(tele)-phospho-L-histidyl/L-threonyl-[pyruvate, phosphate dikinase] + diphosphate. Functionally, bifunctional serine/threonine kinase and phosphorylase involved in the regulation of the pyruvate, phosphate dikinase (PPDK) by catalyzing its phosphorylation/dephosphorylation. This chain is Putative pyruvate, phosphate dikinase regulatory protein 1, found in Staphylococcus saprophyticus subsp. saprophyticus (strain ATCC 15305 / DSM 20229 / NCIMB 8711 / NCTC 7292 / S-41).